The primary structure comprises 503 residues: Na(+)-translocating NADH-quinone reductase subunit B (503 aa).

4 helical membrane passes run 55–75 (MILV…NSGV), 120–142 (IFLP…FAVI), 161–181 (TLPP…GVVV), and 186–206 (FGGT…FLFF). Thr248 is modified (FMN phosphoryl threonine). A run of 5 helical transmembrane segments spans residues 361-381 (TSTF…IASW), 387-407 (FGIG…LIVG), 417-437 (FFIP…LVFM), 452-472 (WIYG…NPAY), and 475-495 (GVML…YFAV).

Belongs to the NqrB/RnfD family. In terms of assembly, composed of six subunits; NqrA, NqrB, NqrC, NqrD, NqrE and NqrF. FMN is required as a cofactor.

The protein resides in the cell inner membrane. The catalysed reaction is a ubiquinone + n Na(+)(in) + NADH + H(+) = a ubiquinol + n Na(+)(out) + NAD(+). In terms of biological role, NQR complex catalyzes the reduction of ubiquinone-1 to ubiquinol by two successive reactions, coupled with the transport of Na(+) ions from the cytoplasm to the periplasm. NqrA to NqrE are probably involved in the second step, the conversion of ubisemiquinone to ubiquinol. The sequence is that of Na(+)-translocating NADH-quinone reductase subunit B from Chlamydia felis (strain Fe/C-56) (Chlamydophila felis).